The chain runs to 188 residues: Pyridoxal 5'-phosphate synthase subunit PdxT (188 aa).

46–48 lines the L-glutamine pocket; that stretch reads GES. The Nucleophile role is filled by C78. Residues R105 and 134–135 contribute to the L-glutamine site; that span reads IR. Active-site charge relay system residues include H170 and E172.

The protein belongs to the glutaminase PdxT/SNO family. In the presence of PdxS, forms a dodecamer of heterodimers. Only shows activity in the heterodimer.

It carries out the reaction aldehydo-D-ribose 5-phosphate + D-glyceraldehyde 3-phosphate + L-glutamine = pyridoxal 5'-phosphate + L-glutamate + phosphate + 3 H2O + H(+). The enzyme catalyses L-glutamine + H2O = L-glutamate + NH4(+). The protein operates within cofactor biosynthesis; pyridoxal 5'-phosphate biosynthesis. Catalyzes the hydrolysis of glutamine to glutamate and ammonia as part of the biosynthesis of pyridoxal 5'-phosphate. The resulting ammonia molecule is channeled to the active site of PdxS. In Desulforamulus reducens (strain ATCC BAA-1160 / DSM 100696 / MI-1) (Desulfotomaculum reducens), this protein is Pyridoxal 5'-phosphate synthase subunit PdxT.